We begin with the raw amino-acid sequence, 951 residues long: Bromodomain-containing protein 8 (951 aa).

N6-acetyllysine is present on Lys-85. Residues 97 to 171 (VRKLTAERVE…ATDAAYQARQ (75 aa)) adopt a coiled-coil conformation. The tract at residues 161–273 (KATDAAYQAR…TPPPSPLLSE (113 aa)) is disordered. Positions 204–226 (TPTTMEEATSGVTPGTLPSTPVT) are enriched in polar residues. Ser-456 and Ser-460 each carry phosphoserine. Residues 520–547 (EENDDPQSLPGPWEHPIQQERDKPVPLP) are disordered. Lys-542 is covalently cross-linked (Glycyl lysine isopeptide (Lys-Gly) (interchain with G-Cter in SUMO2)). Position 554 is an N6-acetyllysine; alternate (Lys-554). Lys-554 is covalently cross-linked (Glycyl lysine isopeptide (Lys-Gly) (interchain with G-Cter in SUMO1); alternate). Lys-554 is covalently cross-linked (Glycyl lysine isopeptide (Lys-Gly) (interchain with G-Cter in SUMO2); alternate). Lys-582 participates in a covalent cross-link: Glycyl lysine isopeptide (Lys-Gly) (interchain with G-Cter in SUMO2). Residues 584–745 (EPTEPEPGMS…PVSESDDGFS (162 aa)) are disordered. Residues 610 to 622 (PELRSQDSDEEPR) show a composition bias toward basic and acidic residues. Lys-648 participates in a covalent cross-link: Glycyl lysine isopeptide (Lys-Gly) (interchain with G-Cter in SUMO2). Ser-652 bears the Phosphoserine mark. Positions 673-688 (ETQHKFEMSDSLKEES) are enriched in basic and acidic residues. Lys-685 participates in a covalent cross-link: Glycyl lysine isopeptide (Lys-Gly) (interchain with G-Cter in SUMO2). Ser-694, Ser-710, and Ser-714 each carry phosphoserine. In terms of domain architecture, Bromo spans 779-884 (IQAQKIWKKA…RDVLEQIQQF (106 aa)). The disordered stretch occupies residues 900–922 (AKSLRGRDSTRKQDASEKDSVPM). A compositionally biased stretch (basic and acidic residues) spans 904 to 919 (RGRDSTRKQDASEKDS).

Component of the NuA4 histone acetyltransferase complex which contains the catalytic subunit KAT5/TIP60 and the subunits EP400, TRRAP/PAF400, BRD8/SMAP, EPC1, DMAP1/DNMAP1, RUVBL1/TIP49, RUVBL2, ING3, actin, ACTL6A/BAF53A, MORF4L1/MRG15, MORF4L2/MRGX, MRGBP, YEATS4/GAS41, VPS72/YL1 and MEAF6. Component of a NuA4-related complex which contains EP400, TRRAP/PAF400, SRCAP, BRD8/SMAP, EPC1, DMAP1/DNMAP1, RUVBL1/TIP49, RUVBL2, actin, ACTL6A/BAF53A, VPS72 and YEATS4/GAS41. BRD8 isoform 2 interacts with RXRA/NR2B1 and THRB/ERBA2. Component of a SWR1-like complex.

Its subcellular location is the nucleus. In terms of biological role, may act as a coactivator during transcriptional activation by hormone-activated nuclear receptors (NR). Stimulates transcriptional activation by AR/DHTR, ESR1/NR3A1, RXRA/NR2B1 and THRB/ERBA2. Component of the NuA4 histone acetyltransferase (HAT) complex which is involved in transcriptional activation of select genes principally by acetylation of nucleosomal histones H4 and H2A. This modification may both alter nucleosome - DNA interactions and promote interaction of the modified histones with other proteins which positively regulate transcription. This complex may be required for the activation of transcriptional programs associated with oncogene and proto-oncogene mediated growth induction, tumor suppressor mediated growth arrest and replicative senescence, apoptosis, and DNA repair. NuA4 may also play a direct role in DNA repair when recruited to sites of DNA damage. Component of a SWR1-like complex that specifically mediates the removal of histone H2A.Z/H2AZ1 from the nucleosome. This chain is Bromodomain-containing protein 8 (Brd8), found in Mus musculus (Mouse).